We begin with the raw amino-acid sequence, 157 residues long: Endoribonuclease YbeY (157 aa).

The Zn(2+) site is built by His-114, His-118, and His-124.

It belongs to the endoribonuclease YbeY family. The cofactor is Zn(2+).

It localises to the cytoplasm. In terms of biological role, single strand-specific metallo-endoribonuclease involved in late-stage 70S ribosome quality control and in maturation of the 3' terminus of the 16S rRNA. The polypeptide is Endoribonuclease YbeY (Edwardsiella ictaluri (strain 93-146)).